A 542-amino-acid chain; its full sequence is uncharacterized protein (542 aa).

A run of 5 helical transmembrane segments spans residues 4 to 23 (FVEN…LLLG), 28 to 47 (FGFR…FSTI), 51 to 70 (ITVP…YTIG), 91 to 113 (LALG…LGLA), and 160 to 182 (YSLT…GGLF). RCK C-terminal domains follow at residues 190–272 (AKNA…LLGE) and 274–355 (VDGH…IFGD). A run of 5 helical transmembrane segments spans residues 363 to 385 (FNLV…EFPL), 390 to 412 (ALSL…MGRT), 425 to 447 (LALR…GAGF), 457 to 479 (LLII…VIGH), and 519 to 541 (YTSV…LFLL).

The protein belongs to the AAE transporter (TC 2.A.81) family.

The protein localises to the cell membrane. This is an uncharacterized protein from Corynebacterium efficiens (strain DSM 44549 / YS-314 / AJ 12310 / JCM 11189 / NBRC 100395).